Reading from the N-terminus, the 242-residue chain is 3-oxoacyl-[acyl-carrier-protein] reductase FabG (242 aa).

NADP(+)-binding positions include 10 to 13 (GSTR), T35, 57 to 58 (NV), and N84. S136 serves as a coordination point for substrate. The active-site Proton acceptor is the Y149. NADP(+)-binding positions include 149-153 (YCAAK) and I182.

The protein belongs to the short-chain dehydrogenases/reductases (SDR) family. As to quaternary structure, homotetramer.

The enzyme catalyses a (3R)-hydroxyacyl-[ACP] + NADP(+) = a 3-oxoacyl-[ACP] + NADPH + H(+). Its pathway is lipid metabolism; fatty acid biosynthesis. In terms of biological role, catalyzes the NADPH-dependent reduction of beta-ketoacyl-ACP substrates to beta-hydroxyacyl-ACP products, the first reductive step in the elongation cycle of fatty acid biosynthesis. This is 3-oxoacyl-[acyl-carrier-protein] reductase FabG (fabG) from Haemophilus influenzae (strain ATCC 51907 / DSM 11121 / KW20 / Rd).